A 356-amino-acid polypeptide reads, in one-letter code: DNA polymerase IV (356 aa).

One can recognise a UmuC domain in the interval 1-188 (MDTSRKIIHI…IPVTKFYGVG (188 aa)). 2 residues coordinate Mg(2+): aspartate 11 and aspartate 106. Residue glutamate 107 is part of the active site.

The protein belongs to the DNA polymerase type-Y family. Monomer. It depends on Mg(2+) as a cofactor.

The protein resides in the cytoplasm. The enzyme catalyses DNA(n) + a 2'-deoxyribonucleoside 5'-triphosphate = DNA(n+1) + diphosphate. Poorly processive, error-prone DNA polymerase involved in untargeted mutagenesis. Copies undamaged DNA at stalled replication forks, which arise in vivo from mismatched or misaligned primer ends. These misaligned primers can be extended by PolIV. Exhibits no 3'-5' exonuclease (proofreading) activity. May be involved in translesional synthesis, in conjunction with the beta clamp from PolIII. This Listeria monocytogenes serovar 1/2a (strain ATCC BAA-679 / EGD-e) protein is DNA polymerase IV.